Reading from the N-terminus, the 1054-residue chain is Bifunctional cytochrome P450/NADPH--P450 reductase 2 (1054 aa).

Positions 1-475 (MKQASAIPQP…QADIKAETKP (475 aa)) are cytochrome P450. Residue Cys403 participates in heme binding. Residues 462–480 (QRKEQADIKAETKPKETKP) are compositionally biased toward basic and acidic residues. Residues 462–482 (QRKEQADIKAETKPKETKPKH) are disordered. The NADPH--P450 reductase stretch occupies residues 476 to 1053 (KETKPKHGTP…RRYVKDVWTG (578 aa)). One can recognise a Flavodoxin-like domain in the interval 486–625 (LLVLFGSNLG…HRESWENRFW (140 aa)). FMN contacts are provided by residues 492–497 (SNLGTA), 539–542 (SYNG), 573–575 (CGN), and 581–583 (TYQ). The 234-residue stretch at 663–896 (YGAFEGIVLE…RTPQSGFQMP (234 aa)) folds into the FAD-binding FR-type domain.

The protein in the N-terminal section; belongs to the cytochrome P450 family. FAD serves as cofactor. It depends on FMN as a cofactor. Requires heme b as cofactor.

It is found in the cytoplasm. It catalyses the reaction an organic molecule + reduced [NADPH--hemoprotein reductase] + O2 = an alcohol + oxidized [NADPH--hemoprotein reductase] + H2O + H(+). The enzyme catalyses 2 oxidized [cytochrome P450] + NADPH = 2 reduced [cytochrome P450] + NADP(+) + H(+). Functions as a fatty acid monooxygenase. Catalyzes hydroxylation of a range of medium to long-chain fatty acids, with a preference for long-chain unsaturated and branched-chain fatty acids over saturated fatty acids. Hydroxylation of myristic acid occurs mainly at the omega-2 and omega-3 positions, in approximately equal proportions. Also displays a NADPH-dependent reductase activity in the C-terminal domain, which allows electron transfer from NADPH to the heme iron of the cytochrome P450 N-terminal domain. The chain is Bifunctional cytochrome P450/NADPH--P450 reductase 2 from Bacillus subtilis (strain 168).